The following is a 582-amino-acid chain: Probable DNA ligase (582 aa).

Position 243 (glutamate 243) interacts with ATP. Lysine 245 (N6-AMP-lysine intermediate) is an active-site residue. Residues arginine 250, arginine 265, glutamate 295, phenylalanine 335, arginine 410, and lysine 416 each coordinate ATP.

It belongs to the ATP-dependent DNA ligase family. It depends on Mg(2+) as a cofactor.

It catalyses the reaction ATP + (deoxyribonucleotide)n-3'-hydroxyl + 5'-phospho-(deoxyribonucleotide)m = (deoxyribonucleotide)n+m + AMP + diphosphate.. Functionally, DNA ligase that seals nicks in double-stranded DNA during DNA replication, DNA recombination and DNA repair. The protein is Probable DNA ligase of Dictyoglomus thermophilum (strain ATCC 35947 / DSM 3960 / H-6-12).